Reading from the N-terminus, the 160-residue chain is Cell cycle regulator of non-homologous end joining (160 aa).

M1 is modified (N-acetylmethionine). A KBM motif is present at residues 1 to 21 (METLKSDNKKRVLPSWMTAPG). The interval 78–152 (KPWEQPSLVA…EGKEEEDELK (75 aa)) is disordered. Residues 99–109 (ESPHTSSPGSS) show a composition bias toward low complexity. The XLM motif lies at 150–160 (ELKYVREIFFS).

Interacts (via KBM motif) with XRCC5/Ku80 and XRCC6/Ku70 heterodimer. Interacts (via XLF motif) with TRIM28/KAP1, ATM, MRE11, NBN and RAD50. Interacts with splicing factor SF3B1. Interacts with ERCC6L2; this interaction is DNA independent.

The protein localises to the cytoplasm. Its subcellular location is the nucleus. The protein resides in the chromosome. Functionally, cell-cycle-specific regulator of classical non-homologous end joining (NHEJ) of DNA double-strand break (DSB) repair, which can act both as an activator or inhibitor of NHEJ, depending on the cell cycle phase. Acts as a regulator of DNA repair pathway choice by specifically inhibiting classical NHEJ during the S and G2 phases, thereby promoting error-free repair by homologous recombination during cell cycle phases when sister chromatids are present. Preferentially protects single-stranded overhangs at break sites by inhibiting classical NHEJ, thereby creating a local environment that favors homologous recombination. Acts via interaction with XRCC5/Ku80 and XRCC6/Ku70. In contrast, acts as an activator of NHEJ during G1 phase of the cell cycle: promotes classical NHEJ in G1 phase cells via multivalent interactions that increase the affinity of DNA damage response proteins for DSB-associated chromatin. Also involved in immunoglobulin V(D)J recombination. May also act as an indirect regulator of proteasome. The chain is Cell cycle regulator of non-homologous end joining from Rattus norvegicus (Rat).